The primary structure comprises 412 residues: Thyroxine-binding globulin (412 aa).

The first 16 residues, 1-16 (MPLFFSLVLLILGLHC), serve as a signal peptide directing secretion. 4 N-linked (GlcNAc...) asparagine glycosylation sites follow: Asn-35, Asn-98, Asn-164, and Asn-252. Thyroxine is bound by residues Asn-292 and Lys-395.

This sequence belongs to the serpin family. As to expression, expressed by the liver and secreted in plasma.

The protein resides in the secreted. Its function is as follows. Major thyroid hormone transport protein in serum. The chain is Thyroxine-binding globulin (SERPINA7) from Ovis aries (Sheep).